The primary structure comprises 309 residues: Protein FdhE (309 aa).

This sequence belongs to the FdhE family.

Its subcellular location is the cytoplasm. Necessary for formate dehydrogenase activity. This is Protein FdhE from Escherichia coli (strain SMS-3-5 / SECEC).